Consider the following 108-residue polypeptide: uncharacterized protein (108 aa).

The next 3 membrane-spanning stretches (helical) occupy residues 10-32 (SLCYFSVFIAPIIVPIVAYFVVN), 45-67 (ISHIVPFVGWLFLFIALLGGAVA), and 77-99 (FVIIGGAVIYFLVVIGIIIWNVI).

The protein resides in the cell membrane. This is an uncharacterized protein from Bacillus subtilis (strain 168).